The primary structure comprises 272 residues: Soluble interferon gamma receptor OPG193 (272 aa).

An N-terminal signal peptide occupies residues 1–13 (MRYIIILAVLFIN). Asn42, Asn150, and Asn267 each carry an N-linked (GlcNAc...) asparagine; by host glycan.

This sequence belongs to the type II cytokine receptor family. Homodimer. Interacts with host IFNG.

The protein resides in the secreted. Its function is as follows. Counteracts the antiviral effects of host IFN-gamma. Acts as a soluble IFN-gamma receptor and thus inhibits the interaction between host IFN-gamma and its receptor. The chain is Soluble interferon gamma receptor OPG193 (OPG193) from Homo sapiens (Human).